A 117-amino-acid polypeptide reads, in one-letter code: Large ribosomal subunit protein bL19 (117 aa).

This sequence belongs to the bacterial ribosomal protein bL19 family.

Its function is as follows. This protein is located at the 30S-50S ribosomal subunit interface and may play a role in the structure and function of the aminoacyl-tRNA binding site. This is Large ribosomal subunit protein bL19 from Micrococcus luteus (strain ATCC 4698 / DSM 20030 / JCM 1464 / CCM 169 / CCUG 5858 / IAM 1056 / NBRC 3333 / NCIMB 9278 / NCTC 2665 / VKM Ac-2230) (Micrococcus lysodeikticus).